The sequence spans 104 residues: L-rhamnose mutarotase (104 aa).

Residue tyrosine 18 participates in substrate binding. The active-site Proton donor is histidine 22. Substrate contacts are provided by residues tyrosine 41 and 76–77 (WW).

Belongs to the rhamnose mutarotase family. As to quaternary structure, homodimer.

It localises to the cytoplasm. It carries out the reaction alpha-L-rhamnose = beta-L-rhamnose. It participates in carbohydrate metabolism; L-rhamnose metabolism. Its function is as follows. Involved in the anomeric conversion of L-rhamnose. The chain is L-rhamnose mutarotase from Klebsiella pneumoniae (strain 342).